Here is a 1424-residue protein sequence, read N- to C-terminus: ABC multidrug transporter H (1424 aa).

Residues 1–49 (MEDQGHLPSEPRALFDRRDDTDSTNTALDETDLSRTPLQDTSHTPHAED) are disordered. The span at 23–42 (STNTALDETDLSRTPLQDTS) shows a compositional bias: polar residues. N-linked (GlcNAc...) asparagine glycosylation is found at asparagine 79 and asparagine 275. The 256-residue stretch at 96 to 351 (LSQFNIPQHI…MEEQGFVCRE (256 aa)) folds into the ABC transporter 1 domain. 7 helical membrane passes run 488-508 (GLFI…LLAM), 520-540 (VLIK…IAQI), 544-564 (IPVL…MVGL), 569-589 (GAFF…TALF), 605-625 (VSGF…PYHA), 629-649 (WFIW…LLSI), and 710-730 (NFGI…IATS). The interval 760–782 (EEAQLNEKAGHKGTGTDSEAQSN) is disordered. N-linked (GlcNAc...) asparagine glycosylation is found at asparagine 790 and asparagine 798. The ABC transporter 2 domain maps to 794–1037 (FTWKNLTYTV…VKDYFARYGA (244 aa)). 830 to 837 (GSSGAGKT) contacts ATP. The next 4 membrane-spanning stretches (helical) occupy residues 1131-1151 (IALH…IGDS), 1161-1181 (TIFN…PLFI), 1200-1220 (VAFV…CAVL), and 1240-1260 (AIFF…QFIA). Residue asparagine 1265 is glycosylated (N-linked (GlcNAc...) asparagine). The next 2 membrane-spanning stretches (helical) occupy residues 1268 to 1288 (FAAL…GVLV) and 1300 to 1320 (WIYW…FSVF). A glycan (N-linked (GlcNAc...) asparagine) is linked at asparagine 1338. Residues 1395–1415 (TAIVCIFVLSSYALVYALMKL) traverse the membrane as a helical segment.

Belongs to the ABC transporter superfamily. ABCG family. PDR (TC 3.A.1.205) subfamily.

The protein resides in the cell membrane. Its activity is regulated as follows. The efflux inhibitor FK506 impairs the transport activity. ABC efflux transporter that is able to transport rhodamine 6G (R-6G), a known substrate for many ABC transporters, but seems not to transport azoles. This chain is ABC multidrug transporter H, found in Aspergillus fumigatus (strain ATCC MYA-4609 / CBS 101355 / FGSC A1100 / Af293) (Neosartorya fumigata).